A 175-amino-acid polypeptide reads, in one-letter code: Adenine phosphoribosyltransferase (175 aa).

This sequence belongs to the purine/pyrimidine phosphoribosyltransferase family. Homodimer.

It localises to the cytoplasm. It carries out the reaction AMP + diphosphate = 5-phospho-alpha-D-ribose 1-diphosphate + adenine. It functions in the pathway purine metabolism; AMP biosynthesis via salvage pathway; AMP from adenine: step 1/1. Its function is as follows. Catalyzes a salvage reaction resulting in the formation of AMP, that is energically less costly than de novo synthesis. This is Adenine phosphoribosyltransferase from Nitrosospira multiformis (strain ATCC 25196 / NCIMB 11849 / C 71).